The chain runs to 245 residues: tRNA pseudouridine synthase A (245 aa).

Residue aspartate 52 is the Nucleophile of the active site. Tyrosine 111 is a binding site for substrate.

Belongs to the tRNA pseudouridine synthase TruA family. Homodimer.

It catalyses the reaction uridine(38/39/40) in tRNA = pseudouridine(38/39/40) in tRNA. Formation of pseudouridine at positions 38, 39 and 40 in the anticodon stem and loop of transfer RNAs. This chain is tRNA pseudouridine synthase A, found in Thermotoga sp. (strain RQ2).